A 404-amino-acid polypeptide reads, in one-letter code: Proteasomal ubiquitin receptor ADRM1-B (404 aa).

Residues 17–130 (SSSKYLVEFR…RKVNEYLNNP (114 aa)) enclose the Pru domain. Disordered stretches follow at residues 128–149 (NNPP…LSAL), 195–258 (GSGG…TSPT), and 376–404 (FAKA…MSLD). Over residues 195–247 (GSGGPTTSSSSSSSRSQSAAVTPSSTTSSTRTTSAPVAPAAAPATTPSPAVSS) the composition is skewed to low complexity. The segment covering 248–258 (NDGASAATSPT) has biased composition (polar residues). In terms of domain architecture, DEUBAD spans 278-390 (TGEGGQQVDL…QSTSSQKERE (113 aa)). Basic and acidic residues predominate over residues 386 to 395 (QKERESSEKK).

The protein belongs to the ADRM1 family. In terms of assembly, component of the 19S proteasome regulatory particle complex. The 26S proteasome consists of a 20S core particle (CP) and two 19S regulatory subunits (RP).

The protein resides in the cytoplasm. It localises to the nucleus. Component of the 26S proteasome, a multiprotein complex involved in the ATP-dependent degradation of ubiquitinated proteins. This complex plays a key role in the maintenance of protein homeostasis by removing misfolded or damaged proteins, which could impair cellular functions, and by removing proteins whose functions are no longer required. Therefore, the proteasome participates in numerous cellular processes, including cell cycle progression, apoptosis, or DNA damage repair. Within the complex, functions as a proteasomal ubiquitin receptor. This Xenopus laevis (African clawed frog) protein is Proteasomal ubiquitin receptor ADRM1-B (adrm1-b).